The primary structure comprises 254 residues: MMAEPEESREPRGIRLQKVLSQAGIASRRAAEKMIVDGRVEVDGHVVTELGTRVDPQVAVVRVDGARVVLDDSLVYLALNKPRGMHSTMSDDRGRPCIGDLIERKVRGTKKLFHVGRLDADTEGLMLLTNDGELAHRLMHPSHEVPKTYLATVTGSVPRGLGRTLRAGIELDDGPAFVDDFAVVDAIPGKTLVRVTLHEGRNRIVRRLLAAAGFPVEALVRTDIGAVSLGKQRPGSVRALRSNEIGQLYQAVGL.

In terms of domain architecture, S4 RNA-binding spans 14–81 (IRLQKVLSQA…DSLVYLALNK (68 aa)). The active-site Nucleophile is the Asp-119.

Belongs to the pseudouridine synthase RsuA family.

The enzyme catalyses a uridine in RNA = a pseudouridine in RNA. This is an uncharacterized protein from Mycobacterium bovis (strain ATCC BAA-935 / AF2122/97).